The following is a 928-amino-acid chain: Nitrogen network kinase 1 (928 aa).

Residues 1 to 12 are compositionally biased toward polar residues; it reads MFTSQRQLRQNG. Disordered stretches follow at residues 1–43 and 81–118; these read MFTS…SYGR and HEHP…LELG. Positions 13–29 are enriched in low complexity; that stretch reads SPMSSSRSSQHSSGTAS. Composition is skewed to polar residues over residues 30 to 40 and 86 to 107; these read PISDSPASNRS and RSTL…SQVN. A phosphoserine mark is found at S178 and S179. Positions 374-394 are disordered; the sequence is ANDDNINSRNTPNNSNDTYVN. Over residues 375 to 391 the composition is skewed to low complexity; that stretch reads NDDNINSRNTPNNSNDT. A phosphoserine mark is found at S405 and S426. The region spanning 449 to 912 is the Protein kinase domain; it reads HRLGKIIGFG…WKLKRIEEVL (464 aa). ATP is bound by residues 455–463 and K478; that span reads IGFGAWGII. D580 acts as the Proton acceptor in catalysis. Disordered stretches follow at residues 670–741 and 767–813; these read ENRK…KYIG and YDSP…SGSS. The span at 683–696 shows a compositional bias: polar residues; sequence VSSSSHSLKHLNQP. S737 bears the Phosphoserine mark. At Y739 the chain carries Phosphotyrosine. A compositionally biased stretch (low complexity) spans 769–813; that stretch reads SPDSSQSEISAASSSSSNLSSLSSSTKASAVTNSGVTTSSPSGSS.

It belongs to the protein kinase superfamily. Ser/Thr protein kinase family. As to quaternary structure, interacts with URE2 and GDH2. Also interacts with the TORC1 kinase complex.

It is found in the cytoplasm. The enzyme catalyses L-seryl-[protein] + ATP = O-phospho-L-seryl-[protein] + ADP + H(+). The catalysed reaction is L-threonyl-[protein] + ATP = O-phospho-L-threonyl-[protein] + ADP + H(+). Functionally, serine/threonine-protein kinase involved in the phosphorylation of the NAD(+)-dependent glutamate dehydrogenase GDH2. When overexpressed, confers hypersensitivity to rapamycin and induces rapid nuclear accumulation of GLN3 to activate the transcription of nitrogen-regulated genes. This Saccharomyces cerevisiae (strain ATCC 204508 / S288c) (Baker's yeast) protein is Nitrogen network kinase 1 (NNK1).